A 296-amino-acid polypeptide reads, in one-letter code: Peroxidase P7 (296 aa).

Glutamine 1 carries the post-translational modification Pyrrolidone carboxylic acid. 4 disulfides stabilise this stretch: cysteine 11-cysteine 91, cysteine 44-cysteine 49, cysteine 97-cysteine 292, and cysteine 176-cysteine 201. Residue histidine 42 is the Proton acceptor of the active site. 5 residues coordinate Ca(2+): aspartate 43, valine 46, glycine 48, aspartate 50, and serine 52. Proline 139 provides a ligand contact to substrate. Histidine 169 is a heme b binding site. Position 170 (threonine 170) interacts with Ca(2+). Residue asparagine 185 is glycosylated (N-linked (GlcNAc...) asparagine). Ca(2+)-binding residues include aspartate 216, serine 219, and aspartate 224.

This sequence belongs to the peroxidase family. Classical plant (class III) peroxidase subfamily. The cofactor is Ca(2+). Heme b is required as a cofactor.

It carries out the reaction 2 a phenolic donor + H2O2 = 2 a phenolic radical donor + 2 H2O. Functionally, removal of H(2)O(2), oxidation of toxic reductants, biosynthesis and degradation of lignin, suberization, auxin catabolism, response to environmental stresses such as wounding, pathogen attack and oxidative stress. These functions might be dependent on each isozyme/isoform in each plant tissue. In Brassica rapa subsp. rapa (Turnip), this protein is Peroxidase P7.